The primary structure comprises 342 residues: Ketol-acid reductoisomerase (NADP(+)) (342 aa).

Residues 2-182 (AEMFYDDDAD…GGLRAGGIKT (181 aa)) enclose the KARI N-terminal Rossmann domain. NADP(+) contacts are provided by residues 25-28 (FGSQ), lysine 48, serine 51, serine 53, and 83-86 (DHLQ). Histidine 108 is a catalytic residue. Residue glycine 134 participates in NADP(+) binding. The KARI C-terminal knotted domain maps to 183-328 (TFTEETETDL…RELRKLMAWV (146 aa)). Mg(2+) contacts are provided by aspartate 191, glutamate 195, glutamate 227, and glutamate 231. Serine 252 is a binding site for substrate.

It belongs to the ketol-acid reductoisomerase family. The cofactor is Mg(2+).

The catalysed reaction is (2R)-2,3-dihydroxy-3-methylbutanoate + NADP(+) = (2S)-2-acetolactate + NADPH + H(+). It catalyses the reaction (2R,3R)-2,3-dihydroxy-3-methylpentanoate + NADP(+) = (S)-2-ethyl-2-hydroxy-3-oxobutanoate + NADPH + H(+). It participates in amino-acid biosynthesis; L-isoleucine biosynthesis; L-isoleucine from 2-oxobutanoate: step 2/4. Its pathway is amino-acid biosynthesis; L-valine biosynthesis; L-valine from pyruvate: step 2/4. Its function is as follows. Involved in the biosynthesis of branched-chain amino acids (BCAA). Catalyzes an alkyl-migration followed by a ketol-acid reduction of (S)-2-acetolactate (S2AL) to yield (R)-2,3-dihydroxy-isovalerate. In the isomerase reaction, S2AL is rearranged via a Mg-dependent methyl migration to produce 3-hydroxy-3-methyl-2-ketobutyrate (HMKB). In the reductase reaction, this 2-ketoacid undergoes a metal-dependent reduction by NADPH to yield (R)-2,3-dihydroxy-isovalerate. The chain is Ketol-acid reductoisomerase (NADP(+)) from Kineococcus radiotolerans (strain ATCC BAA-149 / DSM 14245 / SRS30216).